The primary structure comprises 296 residues: Carboxylesterase YbfK (296 aa).

Residues Ser-129, Glu-244, and His-273 each act as charge relay system in the active site.

It belongs to the AB hydrolase superfamily.

Its subcellular location is the cytoplasm. The enzyme catalyses a carboxylic ester + H2O = an alcohol + a carboxylate + H(+). Functionally, shows carboxylesterase activity in vitro. In Bacillus subtilis (strain 168), this protein is Carboxylesterase YbfK (ybfK).